A 68-amino-acid polypeptide reads, in one-letter code: uncharacterized protein (68 aa).

This is an uncharacterized protein from Caenorhabditis elegans.